The following is a 164-amino-acid chain: V-type proton ATPase 16 kDa proteolipid subunit (164 aa).

The Lumenal portion of the chain corresponds to 1-9 (MSNFAGDET). Residues 10–32 (APFFGFLGAAAALVFSCMGAAYG) traverse the membrane as a helical segment. At 33–54 (TAKSGVGVASMGVMRPELVMKS) the chain is on the cytoplasmic side. Residues 55 to 75 (IVPVVMAGVLGIYGLIIAVII) form a helical membrane-spanning segment. Topologically, residues 76–94 (STGINPKTKSYYLFDGYAH) are lumenal. A helical membrane pass occupies residues 95-116 (LSSGLACGLAGLSAGMAIGIVG). The Cytoplasmic portion of the chain corresponds to 117–128 (DAGVRANAQQPK). Residues 129-154 (LFVGMILILIFAEALALYGLIVGIIL) traverse the membrane as a helical segment. Residues 155 to 164 (SSRAGQSRAE) lie on the Lumenal side of the membrane.

The protein belongs to the V-ATPase proteolipid subunit family. In terms of assembly, V-ATPase is a heteromultimeric enzyme composed of a peripheral catalytic V1 complex (main components: subunits A, B, C, D, E, and F) attached to an integral membrane V0 proton pore complex (main component: the proteolipid protein; which is present as a hexamer that forms the proton-conducting pore).

It is found in the vacuole membrane. Its function is as follows. Proton-conducting pore forming subunit of the membrane integral V0 complex of vacuolar ATPase. V-ATPase is responsible for acidifying a variety of intracellular compartments in eukaryotic cells. This Solanum lycopersicum (Tomato) protein is V-type proton ATPase 16 kDa proteolipid subunit.